Reading from the N-terminus, the 488-residue chain is Receptor-like tyrosine-protein kinase kin-15 (488 aa).

Positions 1-26 (MCLKMRYERIKYILLFSLMHLVYSNS) are cleaved as a signal peptide. N-linked (GlcNAc...) asparagine glycosylation is present at Asn25. The Extracellular segment spans residues 27–50 (TFESFTENPHISSQISNVLYMDQM). Residues 51-70 (FIIYILICILLILISVIVYL) traverse the membrane as a helical segment. At 71–488 (SKRYSQQMMQ…SKLEDWIRRD (418 aa)) the chain is on the cytoplasmic side. Residues 144-458 (EISEDKLGSG…VEFFEEHLSV (315 aa)) enclose the Protein kinase domain. Residues 150–158 (LGSGFFGEV) and Lys183 contribute to the ATP site. Asp319 serves as the catalytic Proton acceptor.

The protein belongs to the protein kinase superfamily. Tyr protein kinase family. As to expression, hypodermal cells.

It localises to the cell membrane. It catalyses the reaction L-tyrosyl-[protein] + ATP = O-phospho-L-tyrosyl-[protein] + ADP + H(+). Its function is as follows. May be specifically involved in cell-cell interactions regulating cell fusions that generate the hypodermis during postembryonic development. It has a role in the development of the HYP7 hypodermal syncytium. The polypeptide is Receptor-like tyrosine-protein kinase kin-15 (kin-15) (Caenorhabditis elegans).